A 367-amino-acid polypeptide reads, in one-letter code: MTASQRTLMVMAGGTGGHVFPGLAVAHRMEAAGWRVVWLGNPAGMEATLVPKHGIPMEYVRFGGLRGKGLKTKLTLPVNLLRACWQSLGALRRVRPDVVLGMGGYITFPAGVMTALSGRPLVLHEQNSIAGLTNKVLAKLAKRVLVAFPGALPHAEWTGNPIRAELARTEPPQARYASRSGPLNVLVVGGSLGAAALNEVVPRALALLAPGERPRVVHQAGVKHIEALKANYEAAGFAAGEGVRLVPFIDDMAAAYAAADLVICRSGAMTVSEIAAVGVAALFVPFPYAVDDHQTTNAAFLADAGAAVLVQQRDLSAELLADWLRGQSRASLAAMAERSRTLAKPEATDEVARVCAKAAGANLEILQ.

UDP-N-acetyl-alpha-D-glucosamine-binding positions include 15-17 (TGG), asparagine 127, arginine 163, serine 191, isoleucine 249, and glutamine 294.

This sequence belongs to the glycosyltransferase 28 family. MurG subfamily.

It is found in the cell inner membrane. It catalyses the reaction di-trans,octa-cis-undecaprenyl diphospho-N-acetyl-alpha-D-muramoyl-L-alanyl-D-glutamyl-meso-2,6-diaminopimeloyl-D-alanyl-D-alanine + UDP-N-acetyl-alpha-D-glucosamine = di-trans,octa-cis-undecaprenyl diphospho-[N-acetyl-alpha-D-glucosaminyl-(1-&gt;4)]-N-acetyl-alpha-D-muramoyl-L-alanyl-D-glutamyl-meso-2,6-diaminopimeloyl-D-alanyl-D-alanine + UDP + H(+). Its pathway is cell wall biogenesis; peptidoglycan biosynthesis. In terms of biological role, cell wall formation. Catalyzes the transfer of a GlcNAc subunit on undecaprenyl-pyrophosphoryl-MurNAc-pentapeptide (lipid intermediate I) to form undecaprenyl-pyrophosphoryl-MurNAc-(pentapeptide)GlcNAc (lipid intermediate II). The polypeptide is UDP-N-acetylglucosamine--N-acetylmuramyl-(pentapeptide) pyrophosphoryl-undecaprenol N-acetylglucosamine transferase (Burkholderia orbicola (strain MC0-3)).